The following is an 880-amino-acid chain: Beta-N-acetylglucosaminidase (880 aa).

The signal sequence occupies residues 1 to 27 (MKKRLIAPMLLSAASLAFFAMSGSAQA). SPOR domains lie at 70–149 (SGTT…VKAY), 150–229 (GAAQ…LKET), and 230–311 (VKGQ…YQQV). A run of 2 repeats spans residues 439–473 (ITTE…GQTA) and 479–513 (ITTE…GQTA). The SH3b domain occupies 630-700 (TATSTVTADV…VDPNNFSRDS (71 aa)).

It belongs to the glycosyl hydrolase 73 family. As to quaternary structure, homodimer.

The protein localises to the secreted. The protein resides in the cell wall. The catalysed reaction is an N(4)-(oligosaccharide-(1-&gt;3)-[oligosaccharide-(1-&gt;6)]-beta-D-Man-(1-&gt;4)-beta-D-GlcNAc-(1-&gt;4)-alpha-D-GlcNAc)-L-asparaginyl-[protein] + H2O = an oligosaccharide-(1-&gt;3)-[oligosaccharide-(1-&gt;6)]-beta-D-Man-(1-&gt;4)-D-GlcNAc + N(4)-(N-acetyl-beta-D-glucosaminyl)-L-asparaginyl-[protein]. Inhibited by diethyl pyrocarbonate, slightly by EDTA. Not inhibited by PMSF, diisopropyl fluorophosphate, 2-mercaptoethanol or N-ethylmaleimide. In terms of biological role, cell wall hydrolase not involved in cell autolysis, competence, sporulation or germination. It hydrolyzes the beta-1,4 glycan bond between the N-acetylglucosaminyl and the N-acetylmuramoyl residues in the glycan chain. The sequence is that of Beta-N-acetylglucosaminidase (lytD) from Bacillus subtilis (strain 168).